A 276-amino-acid polypeptide reads, in one-letter code: Formamidopyrimidine-DNA glycosylase (276 aa).

P2 functions as the Schiff-base intermediate with DNA in the catalytic mechanism. The active-site Proton donor is the E3. Residue K58 is the Proton donor; for beta-elimination activity of the active site. DNA is bound by residues H94, R112, and R157. The FPG-type zinc-finger motif lies at 242-276 (FVYDRAGEPCRVCGAPIRQIVQGQRSTYFCPNCQR). R266 (proton donor; for delta-elimination activity) is an active-site residue.

The protein belongs to the FPG family. Monomer. It depends on Zn(2+) as a cofactor.

The enzyme catalyses Hydrolysis of DNA containing ring-opened 7-methylguanine residues, releasing 2,6-diamino-4-hydroxy-5-(N-methyl)formamidopyrimidine.. It carries out the reaction 2'-deoxyribonucleotide-(2'-deoxyribose 5'-phosphate)-2'-deoxyribonucleotide-DNA = a 3'-end 2'-deoxyribonucleotide-(2,3-dehydro-2,3-deoxyribose 5'-phosphate)-DNA + a 5'-end 5'-phospho-2'-deoxyribonucleoside-DNA + H(+). In terms of biological role, involved in base excision repair of DNA damaged by oxidation or by mutagenic agents. Acts as a DNA glycosylase that recognizes and removes damaged bases. Has a preference for oxidized purines, such as 7,8-dihydro-8-oxoguanine (8-oxoG). Has AP (apurinic/apyrimidinic) lyase activity and introduces nicks in the DNA strand. Cleaves the DNA backbone by beta-delta elimination to generate a single-strand break at the site of the removed base with both 3'- and 5'-phosphates. The chain is Formamidopyrimidine-DNA glycosylase from Burkholderia pseudomallei (strain 1710b).